We begin with the raw amino-acid sequence, 403 residues long: Histidine--tRNA ligase (403 aa).

It belongs to the class-II aminoacyl-tRNA synthetase family. As to quaternary structure, homodimer.

Its subcellular location is the cytoplasm. The catalysed reaction is tRNA(His) + L-histidine + ATP = L-histidyl-tRNA(His) + AMP + diphosphate + H(+). This is Histidine--tRNA ligase (hisS) from Aquifex aeolicus (strain VF5).